The chain runs to 314 residues: Lipoyl synthase (314 aa).

Residues C55, C60, C66, C81, C85, C88, and S292 each coordinate [4Fe-4S] cluster. One can recognise a Radical SAM core domain in the interval 67–281 (WEDREATFLI…SAYAEGLGFA (215 aa)).

Belongs to the radical SAM superfamily. Lipoyl synthase family. [4Fe-4S] cluster is required as a cofactor.

Its subcellular location is the cytoplasm. It carries out the reaction [[Fe-S] cluster scaffold protein carrying a second [4Fe-4S](2+) cluster] + N(6)-octanoyl-L-lysyl-[protein] + 2 oxidized [2Fe-2S]-[ferredoxin] + 2 S-adenosyl-L-methionine + 4 H(+) = [[Fe-S] cluster scaffold protein] + N(6)-[(R)-dihydrolipoyl]-L-lysyl-[protein] + 4 Fe(3+) + 2 hydrogen sulfide + 2 5'-deoxyadenosine + 2 L-methionine + 2 reduced [2Fe-2S]-[ferredoxin]. It participates in protein modification; protein lipoylation via endogenous pathway; protein N(6)-(lipoyl)lysine from octanoyl-[acyl-carrier-protein]: step 2/2. In terms of biological role, catalyzes the radical-mediated insertion of two sulfur atoms into the C-6 and C-8 positions of the octanoyl moiety bound to the lipoyl domains of lipoate-dependent enzymes, thereby converting the octanoylated domains into lipoylated derivatives. The polypeptide is Lipoyl synthase (Mycolicibacterium smegmatis (strain ATCC 700084 / mc(2)155) (Mycobacterium smegmatis)).